The chain runs to 309 residues: 2-dehydro-3-deoxygluconokinase (309 aa).

Substrate-binding positions include 28-32 (GDTLN), tyrosine 88, 102-104 (YWR), and arginine 170. ATP-binding positions include 168–170 (NYR), 228–233 (KRGADS), and 261–264 (AAGD). Position 264 (aspartate 264) interacts with substrate. The active-site Proton acceptor is aspartate 264.

This sequence belongs to the carbohydrate kinase PfkB family.

It catalyses the reaction 2-dehydro-3-deoxy-D-gluconate + ATP = 2-dehydro-3-deoxy-6-phospho-D-gluconate + ADP + H(+). Its pathway is carbohydrate acid metabolism; 2-dehydro-3-deoxy-D-gluconate degradation; D-glyceraldehyde 3-phosphate and pyruvate from 2-dehydro-3-deoxy-D-gluconate: step 1/2. Catalyzes the phosphorylation of 2-keto-3-deoxygluconate (KDG) to produce 2-keto-3-deoxy-6-phosphogluconate (KDPG). This Escherichia coli (strain K12) protein is 2-dehydro-3-deoxygluconokinase (kdgK).